A 415-amino-acid polypeptide reads, in one-letter code: Very late expression factor 1 (415 aa).

Residues 171 to 357 (REIINTILDC…DESDDNDEDD (187 aa)) enclose the Tyr recombinase domain. Residues arginine 214, lysine 242, arginine 307, and histidine 330 contribute to the active site. The tract at residues 339–415 (YLNKYDVGVD…GDDADLLSFN (77 aa)) is disordered. Residue tyrosine 343 is the O-(3'-phospho-DNA)-tyrosine intermediate of the active site. Residues 346-363 (GVDESDDNDEDDDDDEND) show a composition bias toward acidic residues. The span at 375 to 404 (NISNYDINNSSSGNSSSNNTSGNDFNNNIS) shows a compositional bias: low complexity.

The protein belongs to the 'phage' integrase family.

Functionally, involved in very late gene activation. The polypeptide is Very late expression factor 1 (VLF-1) (Heliothis zea nuclear polyhedrosis virus (HzSNPV)).